Reading from the N-terminus, the 208-residue chain is Small ribosomal subunit protein uS4 (208 aa).

The 63-residue stretch at 95-157 (RRIDNIVYRA…DSLKKLIRSN (63 aa)) folds into the S4 RNA-binding domain.

Belongs to the universal ribosomal protein uS4 family. As to quaternary structure, part of the 30S ribosomal subunit. Contacts protein S5. The interaction surface between S4 and S5 is involved in control of translational fidelity.

Its function is as follows. One of the primary rRNA binding proteins, it binds directly to 16S rRNA where it nucleates assembly of the body of the 30S subunit. In terms of biological role, with S5 and S12 plays an important role in translational accuracy. In Borrelia garinii subsp. bavariensis (strain ATCC BAA-2496 / DSM 23469 / PBi) (Borreliella bavariensis), this protein is Small ribosomal subunit protein uS4.